The sequence spans 253 residues: 4-hydroxy-tetrahydrodipicolinate reductase (253 aa).

Position 16–21 (16–21 (GDTGRM)) interacts with NAD(+). Position 44 (R44) interacts with NADP(+). NAD(+) contacts are provided by residues 85-87 (GTT) and 111-114 (CANT). The active-site Proton donor/acceptor is H144. H145 is a binding site for (S)-2,3,4,5-tetrahydrodipicolinate. The active-site Proton donor is K148. Residue 154-155 (GT) participates in (S)-2,3,4,5-tetrahydrodipicolinate binding.

Belongs to the DapB family.

It is found in the cytoplasm. It catalyses the reaction (S)-2,3,4,5-tetrahydrodipicolinate + NAD(+) + H2O = (2S,4S)-4-hydroxy-2,3,4,5-tetrahydrodipicolinate + NADH + H(+). The catalysed reaction is (S)-2,3,4,5-tetrahydrodipicolinate + NADP(+) + H2O = (2S,4S)-4-hydroxy-2,3,4,5-tetrahydrodipicolinate + NADPH + H(+). It functions in the pathway amino-acid biosynthesis; L-lysine biosynthesis via DAP pathway; (S)-tetrahydrodipicolinate from L-aspartate: step 4/4. In terms of biological role, catalyzes the conversion of 4-hydroxy-tetrahydrodipicolinate (HTPA) to tetrahydrodipicolinate. This is 4-hydroxy-tetrahydrodipicolinate reductase from Chlamydia trachomatis serovar A (strain ATCC VR-571B / DSM 19440 / HAR-13).